A 381-amino-acid polypeptide reads, in one-letter code: Probable serine/threonine-protein kinase PBL21 (381 aa).

Residue cysteine 3 is the site of S-palmitoyl cysteine attachment. The 277-residue stretch at 78 to 354 (FREVNLLGEG…GDIVVALEYL (277 aa)) folds into the Protein kinase domain. ATP-binding positions include 84–92 (LGEGGFGRV) and lysine 106. Catalysis depends on aspartate 204, which acts as the Proton acceptor. Residues 362–381 (EARNVSSPSPEISRTPRRDL) form a disordered region.

The protein belongs to the protein kinase superfamily. Ser/Thr protein kinase family. Post-translationally, palmitoylation at Cys-3 and Cys-7 are required for plasma membrane location.

It is found in the cell membrane. The catalysed reaction is L-seryl-[protein] + ATP = O-phospho-L-seryl-[protein] + ADP + H(+). It catalyses the reaction L-threonyl-[protein] + ATP = O-phospho-L-threonyl-[protein] + ADP + H(+). May be involved in plant defense signaling. This chain is Probable serine/threonine-protein kinase PBL21, found in Arabidopsis thaliana (Mouse-ear cress).